The following is a 1326-amino-acid chain: Coiled-coil domain-containing protein 171 (1326 aa).

Coiled-coil stretches lie at residues 53–294 (TTKH…RAAH), 323–391 (AEAV…RLQY), 450–561 (SFSV…AFHK), 597–630 (SELC…ICKN), 660–707 (WHRQ…EQLV), 765–792 (FKLE…MKKK), 979–1143 (FTQR…KECV), and 1217–1241 (IMTL…LHTA). Positions 1306–1326 (SSHSSPVTMSANANRPTQIGL) are disordered.

The protein is Coiled-coil domain-containing protein 171 (CCDC171) of Homo sapiens (Human).